The chain runs to 208 residues: Ribosomal RNA large subunit methyltransferase E (208 aa).

Gly63, Trp65, Asp83, Asp99, and Asp124 together coordinate S-adenosyl-L-methionine. The active-site Proton acceptor is Lys164.

The protein belongs to the class I-like SAM-binding methyltransferase superfamily. RNA methyltransferase RlmE family.

It localises to the cytoplasm. The enzyme catalyses uridine(2552) in 23S rRNA + S-adenosyl-L-methionine = 2'-O-methyluridine(2552) in 23S rRNA + S-adenosyl-L-homocysteine + H(+). Specifically methylates the uridine in position 2552 of 23S rRNA at the 2'-O position of the ribose in the fully assembled 50S ribosomal subunit. The protein is Ribosomal RNA large subunit methyltransferase E of Enterobacter sp. (strain 638).